Consider the following 366-residue polypeptide: GTP cyclohydrolase 1 type 2 homolog (366 aa).

Residues His-64, His-65, Asp-102, His-326, and Glu-329 each contribute to the Zn(2+) site.

This sequence belongs to the GTP cyclohydrolase I type 2/NIF3 family. In terms of assembly, toroid-shaped homohexamer that has a central cavity of about 38 Angstroms diameter.

The chain is GTP cyclohydrolase 1 type 2 homolog from Staphylococcus aureus (strain Mu50 / ATCC 700699).